The following is a 399-amino-acid chain: UDP-galactopyranose mutase (399 aa).

FAD contacts are provided by phenylalanine 18, glutamate 38, asparagine 46, and leucine 66. UDP-alpha-D-galactose contacts are provided by phenylalanine 157, threonine 162, tryptophan 166, and tyrosine 191. Aspartate 224–tryptophan 225 provides a ligand contact to FAD. Asparagine 282, arginine 292, and tyrosine 328 together coordinate UDP-alpha-D-galactose. Arginine 360 contributes to the FAD binding site. Tyrosine 366 provides a ligand contact to UDP-alpha-D-galactose. FAD is bound at residue leucine 367–methionine 369.

Belongs to the UDP-galactopyranose/dTDP-fucopyranose mutase family. Homotetramer. Requires FAD as cofactor.

It catalyses the reaction UDP-alpha-D-galactose = UDP-alpha-D-galactofuranose. It participates in cell wall biogenesis; cell wall polysaccharide biosynthesis. Functionally, catalyzes the interconversion through a 2-keto intermediate of uridine diphosphogalactopyranose (UDP-GalP) into uridine diphosphogalactofuranose (UDP-GalF) which is a key building block for cell wall construction in Mycobacterium tuberculosis. In Mycobacterium tuberculosis (strain CDC 1551 / Oshkosh), this protein is UDP-galactopyranose mutase (glf).